We begin with the raw amino-acid sequence, 308 residues long: Coenzyme PQQ synthesis protein B (308 aa).

The protein belongs to the PqqB family.

The protein operates within cofactor biosynthesis; pyrroloquinoline quinone biosynthesis. Functionally, may be involved in the transport of PQQ or its precursor to the periplasm. This Klebsiella pneumoniae (strain 342) protein is Coenzyme PQQ synthesis protein B.